Reading from the N-terminus, the 159-residue chain is Ecotin (159 aa).

An N-terminal signal peptide occupies residues 1 to 22; that stretch reads MRPTPMTAILALTLAAAAPAMA. C68 and C105 are oxidised to a cystine.

It belongs to the protease inhibitor I11 (ecotin) family. Homodimer.

The protein localises to the periplasm. Functionally, general inhibitor of family S1 serine proteases. This Pseudomonas putida (strain GB-1) protein is Ecotin.